We begin with the raw amino-acid sequence, 130 residues long: Chaperone protein SycT (130 aa).

In terms of assembly, binds to YopT.

Functionally, functions as a specific chaperone for YopT. This is Chaperone protein SycT (sycT) from Yersinia enterocolitica.